Consider the following 204-residue polypeptide: Guanylate kinase (204 aa).

Residues 3-181 enclose the Guanylate kinase-like domain; that stretch reads GTLYIVSASS…AVSEMSAIFT (179 aa). 10-17 is a binding site for ATP; that stretch reads ASSGTGKS.

This sequence belongs to the guanylate kinase family.

It is found in the cytoplasm. It catalyses the reaction GMP + ATP = GDP + ADP. In terms of biological role, essential for recycling GMP and indirectly, cGMP. The chain is Guanylate kinase from Xylella fastidiosa (strain Temecula1 / ATCC 700964).